A 377-amino-acid chain; its full sequence is Malate dehydrogenase, cytoplasmic (377 aa).

Positions 2-5 (PHSV) match the Pro/N-degron motif. Thr-6 carries the phosphothreonine modification. NAD(+) is bound by residues 20 to 26 (GAAGGIG) and Asp-57. Substrate contacts are provided by Arg-106 and Arg-112. Residues Asn-119 and 144–146 (ISN) each bind NAD(+). Substrate is bound by residues Asn-146 and Arg-185. The active-site Proton acceptor is the His-215. Met-266 provides a ligand contact to NAD(+).

Belongs to the LDH/MDH superfamily. MDH type 1 family. Homodimer. In terms of processing, targeted for proteasomal degradation when cells are shifted to glucose-containing growth medium.

It is found in the cytoplasm. The enzyme catalyses (S)-malate + NAD(+) = oxaloacetate + NADH + H(+). The isoenzyme MDH2 may function primarily in the glyoxylate cycle. The sequence is that of Malate dehydrogenase, cytoplasmic (MDH2) from Saccharomyces cerevisiae (strain ATCC 204508 / S288c) (Baker's yeast).